The following is a 78-amino-acid chain: Large ribosomal subunit protein bL31 (78 aa).

Cys16, Cys18, Cys38, and Cys41 together coordinate Zn(2+).

This sequence belongs to the bacterial ribosomal protein bL31 family. Type A subfamily. Part of the 50S ribosomal subunit. Zn(2+) is required as a cofactor.

Binds the 23S rRNA. The polypeptide is Large ribosomal subunit protein bL31 (Parafrankia sp. (strain EAN1pec)).